The primary structure comprises 227 residues: Gamma-glutamyl-hercynylcysteine sulfoxide hydrolase (227 aa).

Cys2 (nucleophile) is an active-site residue. The 226-residue stretch at 2 to 227 (CRHVAWLGAP…RDAHVVVTPL (226 aa)) folds into the Glutamine amidotransferase type-2 domain.

The catalysed reaction is gamma-L-glutamyl-hercynylcysteine S-oxide + H2O = S-(hercyn-2-yl)-L-cysteine S-oxide + L-glutamate. Its pathway is amino-acid biosynthesis; ergothioneine biosynthesis. Its function is as follows. Catalyzes the hydrolysis of the gamma-glutamyl amide bond of hercynyl-gamma-L-glutamyl-L-cysteine sulfoxide to produce hercynylcysteine sulfoxide, a step in the biosynthesis pathway of ergothioneine. This chain is Gamma-glutamyl-hercynylcysteine sulfoxide hydrolase, found in Mycolicibacterium smegmatis (strain ATCC 700084 / mc(2)155) (Mycobacterium smegmatis).